A 1411-amino-acid chain; its full sequence is MSGKPAARQGDMTQYGGSIVQGSAGVRIGAPTGVACSVCPGGVTSGHPVNPLLGAKVLPGETDIALPGPLPFILSRTYSSYRTKTPAPVGSLGPGWKMPADIRLQLRDNTLILSDNGGRSLYFEHLFPGEDGYSRSESLWLVRGGVAKLDEGHRLAALWQALPEELRLSPHRYLATNSPQGPWWLLGWCERVPEADEVLPAPLPPYRVLTGLVDRFGRTQTFHREAAGEFSGEITGVTDGAWRHFRLVLTTQAQRAEEARQQAISGGTEPSAFPDTLPGYTEYGRDNGIRLSAVWLTHDPEYPENLPAAPLVRYGWTPRGELAVVYDRSGKQVRSFTYDDKYRGRMVAHRHTGRPEIRYRYDSDGRVTEQLNPAGLSYTYQYEKDRITITDSLDRREVLHTQGEAGLKRVVKKEHADGSVTQSQFDAVGRLRAQTDAAGRTTEYSPDVVTGLITRITTPDGRASAFYYNHHNQLTSATGPDGLELRREYDELGRLIQETAPDGDITRYRYDNPHSDLPCATEDATGSRKTMTWSRYGQLLSFTDCSGYVTRYDHDRFGQMTAVHREEGLSQYRAYDSRGQLIAVKDTQGHETRYEYNIAGDLTAVIAPDGSRNGTQYDAWGKAVRTTQGGLTRSMEYDAAGRVIRLTSENGSHTTFRYDVLDRLIQETGFDGRTQRYHHDLTGKLIRSEDEGLVTHWHYDEADRLTHRTVKGETAERWQYDERGWLTDISHISEGHRVAVHYRYDEKGRLTGERQTVHHPQTEALLWQHETRHAYNAQGLANRCIPDSLPAVEWLTYGSGYLAGMKLGDTPLVEYTRDRLHRETLRSFGRYELTTAYTPAGQLQSQHLNSLLSDRDYTWNDNGELIRISSPRQTRSYSYSTTGRLTGVHTTAANLDIRIPYATDPAGNRLPDPELHPDSTLSMWPDNRIARDAHYLYRYDRHGRLTEKTDLIPEGVIRTDDERTHRYHYDSQHRLVHYTRTQYEEPLVESRYLYDPLGRRVAKRVWRRERDLTGWMSLSRKPQVTWYGWDGDRLTTIQNDRSRIQTIYQPGSFTPLIRVETATGELAKTQRRSLADALQQSGGEDGGSVVFPPVLVQMLDRLESEILADRVSEESRRWLASCGLTVEQMQNQMDPVYTPARKIHLYHCDHRGLPLALISTEGATAWCAEYDEWGNLLNEENPHQLQQLIRLPGQQYDEESGLYYNRHRYYDPLQGRYITQDPIGLKGGWNLYGYQLNPISDIDPLGLSMWEDAKSGACTNGLCGTLSAMIGPDKFDSIDSTAYDALNKINSQSICEDKEFAGLICKDNSGRYFSTAPNRGERKGSYPFNSPCPNGTEKVSAYHTHGADSHGEYWDEIFSGKDEKIVKSKDNNIKSFYLGTPSGNFKAIDNHGKEITNRKGLPNVCRVHGNM.

28 consecutive repeat copies span residues 330–352, 353–374, 375–417, 418–438, 439–460, 461–481, 482–502, 503–525, 526–546, 547–567, 568–588, 589–609, 610–629, 630–650, 651–671, 672–691, 692–711, 712–734, 735–758, 808–828, 829–850, 851–871, 872–894, 895–930, 931–959, 960–984, 985–1019, and 1162–1186. Positions 330–1186 are 28 X approximate tandem repeats; it reads GKQVRSFTYD…LNEENPHQLQ (857 aa).

It belongs to the RHS family.

Rhs elements have a nonessential function. They may play an important role in the natural ecology of the cell. This chain is Protein RhsB (rhsB), found in Escherichia coli (strain K12).